A 1404-amino-acid chain; its full sequence is DNA-directed RNA polymerase subunit beta' (1404 aa).

Residues Cys70, Cys72, Cys85, and Cys88 each coordinate Zn(2+). Mg(2+) contacts are provided by Asp460, Asp462, and Asp464. Positions 814, 889, 896, and 899 each coordinate Zn(2+).

It belongs to the RNA polymerase beta' chain family. The RNAP catalytic core consists of 2 alpha, 1 beta, 1 beta' and 1 omega subunit. When a sigma factor is associated with the core the holoenzyme is formed, which can initiate transcription. The cofactor is Mg(2+). Zn(2+) serves as cofactor.

The enzyme catalyses RNA(n) + a ribonucleoside 5'-triphosphate = RNA(n+1) + diphosphate. In terms of biological role, DNA-dependent RNA polymerase catalyzes the transcription of DNA into RNA using the four ribonucleoside triphosphates as substrates. The chain is DNA-directed RNA polymerase subunit beta' from Xanthomonas axonopodis pv. citri (strain 306).